We begin with the raw amino-acid sequence, 515 residues long: Iroquois-class homeodomain protein IRX-4 (515 aa).

Positions 144 to 205 (GTRRKNATRE…NARRRLKKEN (62 aa)) form a DNA-binding region, homeobox; TALE-type. Disordered regions lie at residues 205-258 (NKMT…ELEL), 278-307 (TPFQSLDSGPERIPASSDGPGTGKEASTTL), and 398-425 (GPTGVSATTPASSPAVTAPSGALDRHQD). Positions 214-223 (KCADEKRPYG) are enriched in basic and acidic residues. The span at 224-236 (EGEEEEAGEEESR) shows a compositional bias: acidic residues. Over residues 237 to 257 (EEPLKSAKSEGHAGKDDKELE) the composition is skewed to basic and acidic residues. The span at 399-419 (PTGVSATTPASSPAVTAPSGA) shows a compositional bias: low complexity.

The protein belongs to the TALE/IRO homeobox family. Interacts with the vitamin D receptor VDR but doesn't affect its transactivation activity. As to expression, expressed in the developing central nervous system, skin, and vibrissae, but predominantly expressed in the cardiac ventricles of the developing heart. Not expressed in the developing metanephric kidney or adult kidney.

It localises to the nucleus. Likely to be an important mediator of ventricular differentiation during cardiac development. The protein is Iroquois-class homeodomain protein IRX-4 (Irx4) of Mus musculus (Mouse).